A 485-amino-acid chain; its full sequence is Glutamyl-tRNA(Gln) amidotransferase subunit A (485 aa).

Residues lysine 79 and serine 154 each act as charge relay system in the active site. Serine 178 functions as the Acyl-ester intermediate in the catalytic mechanism.

It belongs to the amidase family. GatA subfamily. In terms of assembly, heterotrimer of A, B and C subunits.

The catalysed reaction is L-glutamyl-tRNA(Gln) + L-glutamine + ATP + H2O = L-glutaminyl-tRNA(Gln) + L-glutamate + ADP + phosphate + H(+). Allows the formation of correctly charged Gln-tRNA(Gln) through the transamidation of misacylated Glu-tRNA(Gln) in organisms which lack glutaminyl-tRNA synthetase. The reaction takes place in the presence of glutamine and ATP through an activated gamma-phospho-Glu-tRNA(Gln). The polypeptide is Glutamyl-tRNA(Gln) amidotransferase subunit A (Geobacillus kaustophilus (strain HTA426)).